A 388-amino-acid polypeptide reads, in one-letter code: 1-deoxy-D-xylulose 5-phosphate reductoisomerase (388 aa).

Residues T13, G14, S15, I16, R40, N41, and N124 each coordinate NADPH. K125 contributes to the 1-deoxy-D-xylulose 5-phosphate binding site. E126 is an NADPH binding site. Mn(2+) is bound at residue D150. Residues S151, E152, S176, and H199 each coordinate 1-deoxy-D-xylulose 5-phosphate. Residue E152 participates in Mn(2+) binding. G205 serves as a coordination point for NADPH. 1-deoxy-D-xylulose 5-phosphate contacts are provided by S212, N217, K218, and E221. Position 221 (E221) interacts with Mn(2+).

The protein belongs to the DXR family. In terms of assembly, homodimer. Mg(2+) is required as a cofactor. The cofactor is Mn(2+). It depends on Co(2+) as a cofactor.

It catalyses the reaction 2-C-methyl-D-erythritol 4-phosphate + NADP(+) = 1-deoxy-D-xylulose 5-phosphate + NADPH + H(+). Its pathway is isoprenoid biosynthesis; isopentenyl diphosphate biosynthesis via DXP pathway; isopentenyl diphosphate from 1-deoxy-D-xylulose 5-phosphate: step 1/6. Its activity is regulated as follows. Competitively inhibited by the antibiotic fosmidomycin. Its function is as follows. Catalyzes the NADPH-dependent rearrangement and reduction of 1-deoxy-D-xylulose-5-phosphate (DXP) to 2-C-methyl-D-erythritol 4-phosphate (MEP). Cannot use NADH instead of NADPH as the reducing agent. The protein is 1-deoxy-D-xylulose 5-phosphate reductoisomerase of Zymomonas mobilis subsp. mobilis (strain ATCC 31821 / ZM4 / CP4).